The primary structure comprises 206 residues: Uridine kinase (206 aa).

11 to 18 is a binding site for ATP; the sequence is GGSASGKT.

Belongs to the uridine kinase family.

The protein localises to the cytoplasm. The catalysed reaction is uridine + ATP = UMP + ADP + H(+). It catalyses the reaction cytidine + ATP = CMP + ADP + H(+). The protein operates within pyrimidine metabolism; CTP biosynthesis via salvage pathway; CTP from cytidine: step 1/3. It participates in pyrimidine metabolism; UMP biosynthesis via salvage pathway; UMP from uridine: step 1/1. In Lactococcus lactis subsp. lactis (strain IL1403) (Streptococcus lactis), this protein is Uridine kinase.